The chain runs to 123 residues: Large ribosomal subunit protein bL12 (123 aa).

Belongs to the bacterial ribosomal protein bL12 family. In terms of assembly, homodimer. Part of the ribosomal stalk of the 50S ribosomal subunit. Forms a multimeric L10(L12)X complex, where L10 forms an elongated spine to which 2 to 4 L12 dimers bind in a sequential fashion. Binds GTP-bound translation factors.

Forms part of the ribosomal stalk which helps the ribosome interact with GTP-bound translation factors. Is thus essential for accurate translation. This Shewanella sp. (strain MR-4) protein is Large ribosomal subunit protein bL12.